The chain runs to 524 residues: Methylmalonyl-CoA carboxyltransferase 12S subunit (524 aa).

Positions 13-268 constitute a CoA carboxyltransferase N-terminal domain; that stretch reads MEGRVEQLAE…NNTEEASFVN (256 aa). Residues 13-506 form a carboxyltransferase region; that stretch reads MEGRVEQLAE…RRKIASALEM (494 aa). The CoA carboxyltransferase C-terminal domain maps to 274–506; the sequence is SPNTELRDIV…RRKIASALEM (233 aa).

As to quaternary structure, homohexamer. Transcarboxylase is composed of three subunits: 1.3S, 5S, and 12S. The core of the enzyme is composed of six 12S subunits. On each side of the core there are three pairs of 5S subunits. Each 5S dimer is attached to the core by two 1.3S subunits. Thus the total number of chains is 30 (6 + 12 + 12).

The enzyme catalyses (S)-methylmalonyl-CoA + pyruvate = propanoyl-CoA + oxaloacetate. Functionally, the 12S subunit specifically catalyzes the transfer of the carboxyl group of methylmalonyl CoA to the biotin of the 1.3S subunit forming propanoyl-CoA and carboxylated 1.3S-biotin. This Propionibacterium freudenreichii subsp. shermanii protein is Methylmalonyl-CoA carboxyltransferase 12S subunit.